The following is a 934-amino-acid chain: Translation initiation factor IF-2 (934 aa).

The interval 54 to 323 (AQESKPTTPP…KRQKRNEYEA (270 aa)) is disordered. Low complexity-rich tracts occupy residues 80-154 (PKPG…AGKP), 185-197 (RGGA…PRPG), 206-231 (GQAP…PGAA), and 238-250 (RPSP…TPSP). Gly residues predominate over residues 260 to 303 (GFGGGRGRGGRPGGPGGPGGPGGPGPRGGRGGRRGGTAGAFGRP). Over residues 308 to 317 (RRGRKSKRQK) the composition is skewed to basic residues. Residues 430 to 602 (QRPPVVTVMG…VLLTADASLD (173 aa)) enclose the tr-type G domain. A G1 region spans residues 439-446 (GHVDHGKT). Position 439–446 (439–446 (GHVDHGKT)) interacts with GTP. The interval 464 to 468 (GITQH) is G2. The interval 489 to 492 (DTPG) is G3. GTP-binding positions include 489–493 (DTPGH) and 543–546 (NKID). Positions 543-546 (NKID) are G4. Positions 579–581 (SAK) are G5.

Belongs to the TRAFAC class translation factor GTPase superfamily. Classic translation factor GTPase family. IF-2 subfamily.

It is found in the cytoplasm. One of the essential components for the initiation of protein synthesis. Protects formylmethionyl-tRNA from spontaneous hydrolysis and promotes its binding to the 30S ribosomal subunits. Also involved in the hydrolysis of GTP during the formation of the 70S ribosomal complex. This Corynebacterium urealyticum (strain ATCC 43042 / DSM 7109) protein is Translation initiation factor IF-2.